The chain runs to 429 residues: Enolase (429 aa).

Gln163 lines the (2R)-2-phosphoglycerate pocket. The Proton donor role is filled by Glu205. Mg(2+) is bound by residues Asp242, Glu285, and Asp312. The (2R)-2-phosphoglycerate site is built by Lys337, Arg366, Ser367, and Lys388. Lys337 serves as the catalytic Proton acceptor.

This sequence belongs to the enolase family. Requires Mg(2+) as cofactor.

The protein localises to the cytoplasm. It is found in the secreted. Its subcellular location is the cell surface. The catalysed reaction is (2R)-2-phosphoglycerate = phosphoenolpyruvate + H2O. The protein operates within carbohydrate degradation; glycolysis; pyruvate from D-glyceraldehyde 3-phosphate: step 4/5. Its function is as follows. Catalyzes the reversible conversion of 2-phosphoglycerate (2-PG) into phosphoenolpyruvate (PEP). It is essential for the degradation of carbohydrates via glycolysis. The chain is Enolase from Azoarcus sp. (strain BH72).